Consider the following 205-residue polypeptide: High frequency lysogenization protein HflD homolog (205 aa).

The protein belongs to the HflD family.

The protein resides in the cytoplasm. It is found in the cell inner membrane. This Aliivibrio fischeri (strain MJ11) (Vibrio fischeri) protein is High frequency lysogenization protein HflD homolog.